The following is a 224-amino-acid chain: MSEDLYEDDQDSQVSSGSRHPMAERFRGYLPVVVDVETGGFNSATDALLEIAAVTIGMDEKGFLFPEHTYFYRVEPFEGANIEAAALEFTGIKLDHPLRMAVSEESALTDIFRGVRKALKANGCKRAILVGHNSSFDLGFLNAAVARNDIKRNPFHPFSSFDTATLAGLAYGQTVLARACQSADIDFDGREAHSARYDTEKTAELFCGIVNRWKEMGGWRDFND.

The span at 1–11 shows a compositional bias: acidic residues; sequence MSEDLYEDDQD. The disordered stretch occupies residues 1-20; the sequence is MSEDLYEDDQDSQVSSGSRH. The region spanning 32–206 is the Exonuclease domain; sequence VVVDVETGGF…YDTEKTAELF (175 aa). Residues aspartate 35, glutamate 37, histidine 193, and aspartate 198 each contribute to the Mg(2+) site. The active-site Proton donor/acceptor is histidine 193.

The protein belongs to the RNase T family. As to quaternary structure, homodimer. Mg(2+) is required as a cofactor.

Its function is as follows. Trims short 3' overhangs of a variety of RNA species, leaving a one or two nucleotide 3' overhang. Responsible for the end-turnover of tRNA: specifically removes the terminal AMP residue from uncharged tRNA (tRNA-C-C-A). Also appears to be involved in tRNA biosynthesis. This is Ribonuclease T from Pseudomonas entomophila (strain L48).